The sequence spans 498 residues: ATP synthase subunit beta, chloroplastic (498 aa).

ATP is bound at residue 172-179; it reads GGAGVGKT.

It belongs to the ATPase alpha/beta chains family. F-type ATPases have 2 components, CF(1) - the catalytic core - and CF(0) - the membrane proton channel. CF(1) has five subunits: alpha(3), beta(3), gamma(1), delta(1), epsilon(1). CF(0) has four main subunits: a(1), b(1), b'(1) and c(9-12).

The protein localises to the plastid. Its subcellular location is the chloroplast thylakoid membrane. It catalyses the reaction ATP + H2O + 4 H(+)(in) = ADP + phosphate + 5 H(+)(out). Its function is as follows. Produces ATP from ADP in the presence of a proton gradient across the membrane. The catalytic sites are hosted primarily by the beta subunits. The polypeptide is ATP synthase subunit beta, chloroplastic (Pelargonium hortorum (Common geranium)).